Here is a 63-residue protein sequence, read N- to C-terminus: Large ribosomal subunit protein uL30 (63 aa).

Belongs to the universal ribosomal protein uL30 family. As to quaternary structure, part of the 50S ribosomal subunit.

The polypeptide is Large ribosomal subunit protein uL30 (Hahella chejuensis (strain KCTC 2396)).